Reading from the N-terminus, the 301-residue chain is uncharacterized protein (301 aa).

Disordered regions lie at residues 56 to 126 and 149 to 173; these read ESPT…ESDL and LSTEDPKKVIVQSNTSSSSMSDASS. Over residues 71–82 the composition is skewed to basic and acidic residues; that stretch reads VQKENQKPKDLN. Residues 93-102 show a composition bias toward polar residues; that stretch reads KNSSGLVSQI. Positions 161–173 are enriched in low complexity; sequence SNTSSSSMSDASS.

This is an uncharacterized protein from Caenorhabditis elegans.